Reading from the N-terminus, the 468-residue chain is Peripherin (468 aa).

Low complexity predominate over residues 1–16; sequence MSHHSSGLRSSISSTS. The interval 1-22 is disordered; that stretch reads MSHHSSGLRSSISSTSYRRTFG. The tract at residues 1-96 is head; the sequence is MSHHSSGLRS…FLATRSNEKQ (96 aa). Y17 is modified (3'-nitrotyrosine). A phosphoserine mark is found at S28, S50, and S59. The 311-residue stretch at 94–404 folds into the IF rod domain; that stretch reads EKQELQELND…KLLEGEESRI (311 aa). Positions 97–129 are coil 1A; it reads ELQELNDRFANFIEKVRFLEQQNAALRGELSQA. A linker 1 region spans residues 130–140; sequence RGQEPARADQL. The segment at 141–236 is coil 1B; that stretch reads CQQELRELRR…KLHEEELRDL (96 aa). Residues 237–259 form a linker 2 region; it reads QVSVESQQVQQVEVEATVKPELT. Residues 260–402 form a coil 2 region; that stretch reads AALRDIRAQY…YRKLLEGEES (143 aa). Y376 is subject to 3'-nitrotyrosine. The interval 403–468 is tail; it reads RISVPVHSFA…ELDKSSIHSY (66 aa). The disordered stretch occupies residues 445–468; it reads GEKVVTESQKEQHSELDKSSIHSY. At Y468 the chain carries Phosphotyrosine.

It belongs to the intermediate filament family. As to quaternary structure, forms homodimers (in vitro). Homopolymerizes into a filamentous network (in vitro). Forms heterodimers with NEFL, NEFM or NEFH (in vitro). Interacts with DST (via C-terminus). Interacts with RAB7A; the interaction is direct. Interacts with PRKCE (via phorbol-ester/DAG-type 2 domain). In terms of processing, phosphorylated; phosphorylation increases after nerve injury in regenerating neurons. In terms of tissue distribution, expressed in hypoglossal motor neurons (at protein level). Expressed in the small and large sensory neurons of the dorsal root ganglion (at protein level). Expressed in cutaneous and muscular sensory neurons.

The protein localises to the cytoplasm. Its subcellular location is the cytoskeleton. The protein resides in the cell projection. It localises to the axon. It is found in the perikaryon. In terms of biological role, class-III neuronal intermediate filament protein. My form an independent structural network without the involvement of other neurofilaments or may cooperate with the neuronal intermediate filament proteins NEFL, NEFH, NEFM and INA to form a filamentous network. Assembly of the neuronal intermediate filaments may be regulated by RAB7A. Plays a role in the development of unmyelinated sensory neurons. May be involved in axon elongation and axon regeneration after injury. Inhibits neurite extension in type II spiral ganglion neurons in the cochlea. This chain is Peripherin (Prph), found in Rattus norvegicus (Rat).